We begin with the raw amino-acid sequence, 398 residues long: Transcription factor kk1f (398 aa).

Positions 1-28 are disordered; that stretch reads MTFVETVAVPDNEERPSAGHNRPVADST. One can recognise a bZIP domain in the interval 31–62; sequence PNAREMKVQNRVAQRTHHRRLKTKLEVLRERL. Positions 34-50 are basic motif; sequence REMKVQNRVAQRTHHRR. The leucine-zipper stretch occupies residues 51-58; it reads LKTKLEVL.

This sequence belongs to the bZIP family.

The protein localises to the nucleus. It functions in the pathway secondary metabolite biosynthesis. Functionally, transcription factor; part of the gene cluster that mediates the biosynthesis of KK-1, a novel cyclic depsipeptide with 10 residues which is a promising active compound with high activity against many plant pathogens, especially Botrytis cinerea. Positively regulates the expression of all the genes from the KK-1 biosynthesis gene cluster. The chain is Transcription factor kk1f from Curvularia clavata.